The sequence spans 129 residues: Small ribosomal subunit protein uS8 (129 aa).

This sequence belongs to the universal ribosomal protein uS8 family. As to quaternary structure, part of the 30S ribosomal subunit. Contacts proteins S5 and S12.

In terms of biological role, one of the primary rRNA binding proteins, it binds directly to 16S rRNA central domain where it helps coordinate assembly of the platform of the 30S subunit. This Bdellovibrio bacteriovorus (strain ATCC 15356 / DSM 50701 / NCIMB 9529 / HD100) protein is Small ribosomal subunit protein uS8.